Here is a 393-residue protein sequence, read N- to C-terminus: Demethylspheroidene O-methyltransferase (393 aa).

The segment at 1 to 36 (MPKDDHTGATADRTAQPTGTGKQPLVPGQPGAAPVQ) is disordered. The segment covering 26–36 (VPGQPGAAPVQ) has biased composition (low complexity). Positions 259 and 297 each coordinate S-adenosyl-L-methionine.

The protein belongs to the class I-like SAM-binding methyltransferase superfamily. Cation-independent O-methyltransferase family.

It catalyses the reaction demethylspheroidene + S-adenosyl-L-methionine = spheroidene + S-adenosyl-L-homocysteine + H(+). Its pathway is carotenoid biosynthesis; spheroidene biosynthesis. Functionally, methyltransferase that mediates the O-methylation of 1-hydroxy carotenoids. Converts hydroxyneurosporene to methoxyneurosporene or demethylspheroidene to spheroidene. Also able to produce spirilloxanthin. The protein is Demethylspheroidene O-methyltransferase (crtF) of Rhodobacter capsulatus (strain ATCC BAA-309 / NBRC 16581 / SB1003).